We begin with the raw amino-acid sequence, 368 residues long: F-box/kelch-repeat protein At2g44700 (368 aa).

The interval 1–23 (MSSSNEPPRKTDQPSSSSASASA) is disordered. A compositionally biased stretch (low complexity) spans 14-23 (PSSSSASASA). Residues 25–71 (PSLFLSLPLEIISMILARVPKRYYPILCSVSKNMRSLVRSPEIHKAR) enclose the F-box domain. Residues 177–221 (KVYVIGGYQDDEIAAESFDLNTQTWEAAPIPDEKESHRWICKANV) form a Kelch repeat.

This is F-box/kelch-repeat protein At2g44700 from Arabidopsis thaliana (Mouse-ear cress).